Reading from the N-terminus, the 1057-residue chain is DNA-directed RNA polymerase subunit beta' (1057 aa).

Residues Cys-60, Cys-62, Cys-75, and Cys-78 each contribute to the Zn(2+) site. Residues Asp-449, Asp-451, and Asp-453 each coordinate Mg(2+). Zn(2+) is bound by residues Cys-822, Cys-896, Cys-903, and Cys-906.

Belongs to the RNA polymerase beta' chain family. In terms of assembly, the RNAP catalytic core consists of 2 alpha, 1 beta, 1 beta' and 1 omega subunit. When a sigma factor is associated with the core the holoenzyme is formed, which can initiate transcription. Mg(2+) serves as cofactor. Requires Zn(2+) as cofactor.

It carries out the reaction RNA(n) + a ribonucleoside 5'-triphosphate = RNA(n+1) + diphosphate. Functionally, DNA-dependent RNA polymerase catalyzes the transcription of DNA into RNA using the four ribonucleoside triphosphates as substrates. In Staphylococcus aureus, this protein is DNA-directed RNA polymerase subunit beta'.